A 193-amino-acid chain; its full sequence is dTTP/UTP pyrophosphatase (193 aa).

Asp75 functions as the Proton acceptor in the catalytic mechanism.

This sequence belongs to the Maf family. YhdE subfamily. A divalent metal cation serves as cofactor.

It is found in the cytoplasm. The catalysed reaction is dTTP + H2O = dTMP + diphosphate + H(+). The enzyme catalyses UTP + H2O = UMP + diphosphate + H(+). Nucleoside triphosphate pyrophosphatase that hydrolyzes dTTP and UTP. May have a dual role in cell division arrest and in preventing the incorporation of modified nucleotides into cellular nucleic acids. This chain is dTTP/UTP pyrophosphatase, found in Chlorobium luteolum (strain DSM 273 / BCRC 81028 / 2530) (Pelodictyon luteolum).